The sequence spans 443 residues: ATP-dependent protease ATPase subunit HslU (443 aa).

ATP is bound by residues I20, 62-67 (GVGKTE), D255, E321, and R393.

The protein belongs to the ClpX chaperone family. HslU subfamily. A double ring-shaped homohexamer of HslV is capped on each side by a ring-shaped HslU homohexamer. The assembly of the HslU/HslV complex is dependent on binding of ATP.

It is found in the cytoplasm. ATPase subunit of a proteasome-like degradation complex; this subunit has chaperone activity. The binding of ATP and its subsequent hydrolysis by HslU are essential for unfolding of protein substrates subsequently hydrolyzed by HslV. HslU recognizes the N-terminal part of its protein substrates and unfolds these before they are guided to HslV for hydrolysis. In Helicobacter pylori (strain G27), this protein is ATP-dependent protease ATPase subunit HslU.